The sequence spans 72 residues: Putative sodium channel toxin Ts18 (72 aa).

The N-terminal stretch at 1–21 (MNFRFPFLLMITISLIGAVLT) is a signal peptide. 3 cysteine pairs are disulfide-bonded: Cys38–Cys61, Cys47–Cys66, and Cys51–Cys68.

It belongs to the long (3 C-C) scorpion toxin superfamily. In terms of tissue distribution, expressed by the venom gland.

The protein resides in the secreted. Functionally, binds to sodium channels (Nav) and affects the channel activation process. The protein is Putative sodium channel toxin Ts18 of Tityus serrulatus (Brazilian scorpion).